The following is a 705-amino-acid chain: Forkhead box protein P1 (705 aa).

Over residues 1 to 19 the composition is skewed to polar residues; it reads MMQESGSETKSNGSAIQNG. Residues 1 to 41 form a disordered region; that stretch reads MMQESGSETKSNGSAIQNGSSGGNHLLECGALRDTRSNGEA. The residue at position 113 (serine 113) is a Phosphoserine. Disordered stretches follow at residues 267-286 and 291-326; these read HTAEETTSSNHSSLDLTSTC and APSKSSLIMNPHASTNGQLSVHTPKRESLSHEEHPH. 2 stretches are compositionally biased toward polar residues: residues 276-286 and 291-311; these read NHSSLDLTSTC and APSKSSLIMNPHASTNGQLSV. The segment covering 314-326 has biased composition (basic and acidic residues); it reads PKRESLSHEEHPH. Lysine 315 is covalently cross-linked (Glycyl lysine isopeptide (Lys-Gly) (interchain with G-Cter in SUMO2)). The segment at 334–359 adopts a C2H2-type zinc-finger fold; it reads GVCKWPGCEAVCDDFPAFLKHLNSEH. Residues 376–397 form a leucine-zipper region; it reads VQQLELQLAKDKERLQAMMTHL. Residues lysine 400 and lysine 405 each participate in a glycyl lysine isopeptide (Lys-Gly) (interchain with G-Cter in SUMO2) cross-link. The interval 410 to 414 is CTBP1-binding; it reads PLNLV. The span at 418-431 shows a compositional bias: polar residues; sequence TLSKSASEASPQSL. The tract at residues 418-450 is disordered; that stretch reads TLSKSASEASPQSLPHTPTTPTAPLTPVTQGPS. Over residues 432–446 the composition is skewed to low complexity; sequence PHTPTTPTAPLTPVT. Residue lysine 470 forms a Glycyl lysine isopeptide (Lys-Gly) (interchain with G-Cter in SUMO2) linkage. Positions 493–583 form a DNA-binding region, fork-head; the sequence is RPPFTYASLI…PQKISGNPSL (91 aa). The disordered stretch occupies residues 639–705; that stretch reads EHTNSNESDS…EDEPVNEDME (67 aa). Positions 640-651 are enriched in polar residues; sequence HTNSNESDSSPG. Position 681 is a phosphothreonine (threonine 681). Serine 686 carries the post-translational modification Phosphoserine. Over residues 695–705 the composition is skewed to acidic residues; it reads YEDEPVNEDME.

As to quaternary structure, forms homodimers and heterodimers with FOXP2 and FOXP4. Dimerization is required for DNA-binding. Self-associates. Interacts with CTBP1. Interacts with NCOR2 and AR. Interacts with FOXP2. Interacts with TBR1. Interacts with AURKA; this interaction facilitates the phosphorylation of FOXP1, which suppresses the expression of FBXL7. Interacts with ZMYM2. In terms of tissue distribution, isoform 5 is specifically expressed in embryonic stem cells. Highest expression in the lung, brain, and spleen. Lower expression in heart, skeletal muscle, kidney, small intestine (isoform 3 not present) and liver.

The protein localises to the nucleus. Transcriptional repressor. Can act with CTBP1 to synergistically repress transcription but CTPBP1 is not essential. Plays an important role in the specification and differentiation of lung epithelium. Acts cooperatively with FOXP4 to regulate lung secretory epithelial cell fate and regeneration by restricting the goblet cell lineage program; the function may involve regulation of AGR2. Essential transcriptional regulator of B-cell development. Involved in regulation of cardiac muscle cell proliferation. Involved in the columnar organization of spinal motor neurons. Promotes the formation of the lateral motor neuron column (LMC) and the preganglionic motor column (PGC) and is required for respective appropriate motor axon projections. The segment-appropriate generation of spinal cord motor columns requires cooperation with other Hox proteins. Can regulate PITX3 promoter activity; may promote midbrain identity in embryonic stem cell-derived dopamine neurons by regulating PITX3. Negatively regulates the differentiation of T follicular helper cells T(FH)s. Involved in maintenance of hair follicle stem cell quiescence; the function probably involves regulation of FGF18. Represses transcription of various pro-apoptotic genes and cooperates with NF-kappa B-signaling in promoting B-cell expansion by inhibition of caspase-dependent apoptosis. Binds to CSF1R promoter elements and is involved in regulation of monocyte differentiation and macrophage functions; repression of CSF1R in monocytes seems to involve NCOR2 as corepressor. Involved in endothelial cell proliferation, tube formation and migration indicative for a role in angiogenesis; the role in neovascularization seems to implicate suppression of SEMA5B. Can negatively regulate androgen receptor signaling. Acts as a transcriptional activator of the FBXL7 promoter; this activity is regulated by AURKA. In terms of biological role, involved in transcriptional regulation in embryonic stem cells (ESCs). Stimulates expression of transcription factors that are required for pluripotency and decreases expression of differentiation-associated genes. Has distinct DNA-binding specifities as compared to the canonical form and preferentially binds DNA with the sequence 5'-CGATACAA-3' (or closely related sequences). Promotes ESC self-renewal and pluripotency. The chain is Forkhead box protein P1 (Foxp1) from Mus musculus (Mouse).